We begin with the raw amino-acid sequence, 316 residues long: Melanocyte-stimulating hormone receptor (316 aa).

Over 1-37 (MPMQGAQRKLLGSLNSTPTATSNLGLAANHTGAPCLE) the chain is Extracellular. The N-linked (GlcNAc...) asparagine glycan is linked to N29. Residues 38–63 (VSIPDGLFLSLGLVSLVENMLVVAAI) form a helical membrane-spanning segment. The Cytoplasmic segment spans residues 64–72 (AKNRNLHSP). The helical transmembrane segment at 73 to 93 (MYCFICCLALSDLLVSGSNML) threads the bilayer. At 94 to 118 (ETAVVVLLEAGALATRASVVQQLHN) the chain is on the extracellular side. A helical membrane pass occupies residues 119-140 (TIDVLTYSSMLCSLCFVGAIAV). Residues 141–163 (DRYISIFYALRYHSIMTLPRVQR) lie on the Cytoplasmic side of the membrane. Residues 164–183 (VIAAIWVASVTSSTLFITYY) form a helical membrane-spanning segment. The Extracellular segment spans residues 184 to 191 (EHVVALLC). Residues 192–210 (LVVFLTMLVLMAVLYVHML) form a helical membrane-spanning segment. The Cytoplasmic segment spans residues 211 to 239 (ARACQHAQGITRLHKRQPPAHQGFGLRGA). Residues 240-265 (ATLTILLGIFFLCWGPFFLHLTLVVF) form a helical membrane-spanning segment. At 266–278 (CPQHLTCSCIFKN) the chain is on the extracellular side. Residues 279-299 (FKVFLTLIICNTIIDPLIYAF) form a helical membrane-spanning segment. Over 300-316 (RSQELCRTLKEVLLCSW) the chain is Cytoplasmic. The S-palmitoyl cysteine moiety is linked to residue C314.

It belongs to the G-protein coupled receptor 1 family. Interacts with MGRN1, but does not undergo MGRN1-mediated ubiquitination; this interaction competes with GNAS-binding and thus inhibits agonist-induced cAMP production. Interacts with OPN3; the interaction results in a decrease in MC1R-mediated cAMP signaling and ultimately a decrease in melanin production in melanocytes.

The protein localises to the cell membrane. Functionally, receptor for MSH (alpha, beta and gamma) and ACTH. The activity of this receptor is mediated by G proteins which activate adenylate cyclase. Mediates melanogenesis, the production of eumelanin (black/brown) and phaeomelanin (red/yellow), via regulation of cAMP signaling in melanocytes. This is Melanocyte-stimulating hormone receptor (MC1R) from Cebus albifrons (White-fronted capuchin).